The sequence spans 2410 residues: Reducing polyketide synthase FUB1 (2410 aa).

Residues 1–42 show a composition bias toward low complexity; sequence MTLSNGSNGANGTSNGNGAHPSANGFHNAANGGANNGSANGG. The disordered stretch occupies residues 1-52; it reads MTLSNGSNGANGTSNGNGAHPSANGFHNAANGGANNGSANGGAEHDAGRPQV. One can recognise a Ketosynthase family 3 (KS3) domain in the interval 57 to 479; the sequence is SSAIAVIGVS…GANAHAVLDD (423 aa). Active-site for beta-ketoacyl synthase activity residues include Cys230, His365, and His403. The tract at residues 608–929 is malonyl-CoA:ACP transacylase (MAT) domain; it reads TFIFTGQGAQ…FSAIKRKQDA (322 aa). Catalysis depends on Ser699, which acts as the For malonyltransferase activity. The interval 994–1127 is N-terminal hotdog fold; that stretch reads LELLGVRDPR…GLVSTSYKHD (134 aa). The PKS/mFAS DH domain occupies 994–1307; that stretch reads LELLGVRDPR…TVPLRGASDS (314 aa). A dehydratase (DH) domain region spans residues 995 to 1302; that stretch reads ELLGVRDPRS…LKGCKTVPLR (308 aa). His1026 serves as the catalytic Proton acceptor; for dehydratase activity. Residues 1155 to 1307 are C-terminal hotdog fold; that stretch reads LPSVDPTVFY…TVPLRGASDS (153 aa). Residue Asp1220 is the Proton donor; for dehydratase activity of the active site. The tract at residues 1714 to 2026 is enoyl reductase (ER) domain; it reads GLLDTLEYLS…SGGHVGKIVL (313 aa). The interval 2050–2226 is ketoreductase (KR) domain; that stretch reads ATYVLIGGLG…AATSINLSLV (177 aa). One can recognise a Carrier domain in the interval 2329–2406; the sequence is EVYEIVLQQL…GFTKKVMAKS (78 aa). The residue at position 2366 (Ser2366) is an O-(pantetheine 4'-phosphoryl)serine.

It functions in the pathway mycotoxin biosynthesis. Reducing polyketide synthase; part of the gene cluster that mediates the biosynthesis of fusaric acid, a mycotoxin with low to moderate toxicity to animals and humans, but with high phytotoxic properties. L-aspartate is suggested as fusaric acid amino acid precursor that is activated and further processed to O-acetyl-L-homoserine by cluster enzymes aspartate kinase FUB3 and homoserine O-acetyltransferase FUB5, as well as enzymes of the primary metabolism. The polyketide synthase (PKS) FUB1 generates the triketide trans-2-hexenal which is presumptively released by the hydrolase FUB4 and linked to the NRPS-bound amino acid precursor by NAD(P)-dependent dehydrogenase FUB6. FUB1, FUB4, and the non-canonical NRPS Fub8 may form an enzyme complex. Further processing of the NRPS-bound intermediate might be carried out by FUB6 and the sulfhydrylase FUB7, enabling a spontaneous electrocyclization to close the carbon backbone of fusaric acid. Dihydrofusaric acid is likely to be released via reduction by the thioester reductase (TR) domain of FUB8 whereupon the final oxidation to fusaric acid may (also) be performed by the FMN-dependent dehydrogenase FUB9. This chain is Reducing polyketide synthase FUB1, found in Gibberella fujikuroi (strain CBS 195.34 / IMI 58289 / NRRL A-6831) (Bakanae and foot rot disease fungus).